A 280-amino-acid polypeptide reads, in one-letter code: NAD(P)H-quinone oxidoreductase subunit K, chloroplastic (280 aa).

The [4Fe-4S] cluster site is built by Cys65, Cys66, Cys130, and Cys161. Residues 257–280 are disordered; sequence LLKDWKQSNQKQEQNVKMMKEEEA.

The protein belongs to the complex I 20 kDa subunit family. In terms of assembly, NDH is composed of at least 16 different subunits, 5 of which are encoded in the nucleus. Requires [4Fe-4S] cluster as cofactor.

It localises to the plastid. The protein localises to the chloroplast thylakoid membrane. The enzyme catalyses a plastoquinone + NADH + (n+1) H(+)(in) = a plastoquinol + NAD(+) + n H(+)(out). It carries out the reaction a plastoquinone + NADPH + (n+1) H(+)(in) = a plastoquinol + NADP(+) + n H(+)(out). In terms of biological role, NDH shuttles electrons from NAD(P)H:plastoquinone, via FMN and iron-sulfur (Fe-S) centers, to quinones in the photosynthetic chain and possibly in a chloroplast respiratory chain. The immediate electron acceptor for the enzyme in this species is believed to be plastoquinone. Couples the redox reaction to proton translocation, and thus conserves the redox energy in a proton gradient. In Staurastrum punctulatum (Green alga), this protein is NAD(P)H-quinone oxidoreductase subunit K, chloroplastic.